A 145-amino-acid polypeptide reads, in one-letter code: 3-dehydroquinate dehydratase (145 aa).

The active-site Proton acceptor is Tyr-23. Residues Asn-75, His-81, and Asp-88 each contribute to the substrate site. The active-site Proton donor is the His-101. Residues 102–103 (IS) and Arg-112 contribute to the substrate site.

It belongs to the type-II 3-dehydroquinase family. As to quaternary structure, homododecamer.

The catalysed reaction is 3-dehydroquinate = 3-dehydroshikimate + H2O. It functions in the pathway metabolic intermediate biosynthesis; chorismate biosynthesis; chorismate from D-erythrose 4-phosphate and phosphoenolpyruvate: step 3/7. Functionally, catalyzes a trans-dehydration via an enolate intermediate. This is 3-dehydroquinate dehydratase from Caldicellulosiruptor bescii (strain ATCC BAA-1888 / DSM 6725 / KCTC 15123 / Z-1320) (Anaerocellum thermophilum).